Here is a 374-residue protein sequence, read N- to C-terminus: SH2 domain-containing protein 2A (374 aa).

The SH2 domain maps to 116-207 (WFHGFITRRE…PYGEILTQPL (92 aa)). The interval 213–232 (EPAGLSLRADSDSGSKRQDP) is disordered. A compositionally biased stretch (basic and acidic residues) spans 221-232 (ADSDSGSKRQDP). At Ser-237 the chain carries Phosphoserine. The disordered stretch occupies residues 241 to 301 (QQGQAQASGH…QAPPINPIYQ (61 aa)). Polar residues predominate over residues 256 to 266 (ASQQKATSQAS). An SH3-binding motif is present at residues 267-273 (RPRPPIP). Pro residues predominate over residues 268 to 279 (PRPPIPAKPQLP). The residue at position 316 (Ser-316) is a Phosphoserine. Disordered stretches follow at residues 321–340 (PSNI…IGHP) and 353–374 (GQVR…GSPS).

In terms of assembly, interacts with KDR. Interacts with p56-LCK, TXK and ITK. Phosphorylated on tyrosine residues upon TCR-stimulation. In terms of tissue distribution, expression limited to tissues of the immune system and, in particular, activated T-cells and natural killer cells. Expressed in the thymus, lymph node, and to a lesser extent, in the spleen and bone marrow. According to PubMed:10553045, also expressed in the lung.

Its subcellular location is the cytoplasm. The protein localises to the cell membrane. In terms of biological role, could be a T-cell-specific adapter protein involved in the control of T-cell activation. May play a role in p56-LCK-mediated T-cell signaling. Could be involved in the regulation of responses to T-cell activation stimuli, specifically proliferation and lymphokine production. Interactions with ITK and TXK may provide important biochemical links of these two important kinases with other components in the T-cell activation machinery. The protein is SH2 domain-containing protein 2A (Sh2d2a) of Mus musculus (Mouse).